Here is a 152-residue protein sequence, read N- to C-terminus: Acidic phospholipase A2 57 (152 aa).

The signal sequence occupies residues 1 to 21; it reads MYPAHLLGLLAVCVSLLGAAS. The propeptide occupies 22-27; it reads IPPLPL. Disulfide bonds link Cys38–Cys104, Cys54–Cys151, Cys56–Cys72, Cys71–Cys132, Cys78–Cys125, Cys88–Cys118, and Cys111–Cys123. Residues Tyr55, Gly57, and Gly59 each contribute to the Ca(2+) site. His75 is an active-site residue. Ca(2+) is bound at residue Asp76. Asp126 is a catalytic residue.

The protein belongs to the phospholipase A2 family. Group I subfamily. D49 sub-subfamily. Requires Ca(2+) as cofactor. In terms of tissue distribution, expressed by the venom gland.

The protein localises to the secreted. The enzyme catalyses a 1,2-diacyl-sn-glycero-3-phosphocholine + H2O = a 1-acyl-sn-glycero-3-phosphocholine + a fatty acid + H(+). Its function is as follows. PLA2 catalyzes the calcium-dependent hydrolysis of the 2-acyl groups in 3-sn-phosphoglycerides. The polypeptide is Acidic phospholipase A2 57 (Hydrophis hardwickii (Hardwick's spine-bellied seasnake)).